Reading from the N-terminus, the 1033-residue chain is RNA cytidine acetyltransferase (1033 aa).

ATP is bound by residues 285–294 (GRGKSAALGL) and Arg-465. The 135-residue stretch at 560-694 (VDLKNPKLPD…IHVRDAKTMP (135 aa)) folds into the N-acetyltransferase domain. Acetyl-CoA-binding positions include 626–628 (IAV), 633–639 (VKMGYGT), and Arg-727. Residues 988–1033 (ENQIQKTNGKGARVVSIKGEKRKNNSLDASDKKTKEKPSSKKKFRK) form a disordered region. Positions 1005 to 1026 (KGEKRKNNSLDASDKKTKEKPS) are enriched in basic and acidic residues.

Belongs to the RNA cytidine acetyltransferase family. NAT10 subfamily. In terms of assembly, interacts with tan1.

It is found in the nucleus. The protein localises to the nucleolus. The catalysed reaction is a cytidine in 18S rRNA + acetyl-CoA + ATP + H2O = an N(4)-acetylcytidine in 18S rRNA + ADP + phosphate + CoA + H(+). The enzyme catalyses a cytidine in tRNA + acetyl-CoA + ATP + H2O = an N(4)-acetylcytidine in tRNA + ADP + phosphate + CoA + H(+). In terms of biological role, RNA cytidine acetyltransferase with specificity toward both 18S rRNA and tRNAs. Catalyzes the formation of N(4)-acetylcytidine (ac4C) at positions 1297 and 1815 in 18S rRNA. Required for early nucleolar cleavages of precursor rRNA at sites A0, A1 and A2 during 18S rRNA synthesis. Catalyzes the formation of ac4C in serine and leucine tRNAs. Requires the tRNA-binding adapter protein tan1 for full tRNA acetyltransferase activity but not for 18S rRNA acetylation. This chain is RNA cytidine acetyltransferase, found in Schizosaccharomyces pombe (strain 972 / ATCC 24843) (Fission yeast).